The primary structure comprises 473 residues: Ribulose bisphosphate carboxylase large chain (473 aa).

2 residues coordinate substrate: N116 and T166. K168 acts as the Proton acceptor in catalysis. K170 contributes to the substrate binding site. K194, D196, and E197 together coordinate Mg(2+). The residue at position 194 (K194) is an N6-carboxylysine. The Proton acceptor role is filled by H287. Substrate contacts are provided by R288, H320, and S372.

It belongs to the RuBisCO large chain family. Type I subfamily. Heterohexadecamer of 8 large chains and 8 small chains. Requires Mg(2+) as cofactor.

It carries out the reaction 2 (2R)-3-phosphoglycerate + 2 H(+) = D-ribulose 1,5-bisphosphate + CO2 + H2O. The enzyme catalyses D-ribulose 1,5-bisphosphate + O2 = 2-phosphoglycolate + (2R)-3-phosphoglycerate + 2 H(+). In terms of biological role, ruBisCO catalyzes two reactions: the carboxylation of D-ribulose 1,5-bisphosphate, the primary event in carbon dioxide fixation, as well as the oxidative fragmentation of the pentose substrate. Both reactions occur simultaneously and in competition at the same active site. This Thiomonas intermedia (strain K12) (Thiobacillus intermedius) protein is Ribulose bisphosphate carboxylase large chain.